The chain runs to 139 residues: Large ribosomal subunit protein uL16 (139 aa).

The span at 1–17 (MLIPRRTKHRKQHHPRR) shows a compositional bias: basic residues. The disordered stretch occupies residues 1–24 (MLIPRRTKHRKQHHPRRTGAASGG).

The protein belongs to the universal ribosomal protein uL16 family. Part of the 50S ribosomal subunit.

Binds 23S rRNA and is also seen to make contacts with the A and possibly P site tRNAs. The polypeptide is Large ribosomal subunit protein uL16 (Beutenbergia cavernae (strain ATCC BAA-8 / DSM 12333 / CCUG 43141 / JCM 11478 / NBRC 16432 / NCIMB 13614 / HKI 0122)).